Reading from the N-terminus, the 245-residue chain is Transcriptional activator protein ExpR (245 aa).

An HTH luxR-type domain is found at 173–238 (RSNDKDIFSQ…HAIRLGIELQ (66 aa)). Positions 197-216 (YQEIALILDIKTGTVKFHIG) form a DNA-binding region, H-T-H motif.

It belongs to the autoinducer-regulated transcriptional regulatory protein family.

Functions as an OHLL responsive transcriptional regulator that acts in virulence (soft rot disease) through the activation of genes for plant tissue macerating enzymes. The chain is Transcriptional activator protein ExpR (expR) from Pectobacterium parmentieri.